The primary structure comprises 486 residues: Bile acid receptor (486 aa).

K132 is covalently cross-linked (Glycyl lysine isopeptide (Lys-Gly) (interchain with G-Cter in SUMO1)). The segment at residues 134–209 is a DNA-binding region (nuclear receptor); the sequence is DELCVVCGDR…MGMLAECMYT (76 aa). The NR C4-type zinc finger occupies 137–157; sequence CVVCGDRASGYHYNALTCEGC. Phosphoserine; by PKC/PRKCA is present on residues S145 and S164. K167 is subject to N6-acetyllysine; by EP300. The NR C4-type zinc-finger motif lies at 173-197; sequence CKNGGNCVMDMYMRRKCQECRLRKC. Residue K220 is modified to N6-methyllysine; by SETD7. K227 carries the post-translational modification N6-acetyllysine; by EP300. The region spanning 262–486 is the NR LBD domain; that stretch reads DQQTLLHFIM…PLLCEIWDVQ (225 aa). Residue K289 forms a Glycyl lysine isopeptide (Lys-Gly) (interchain with G-Cter in SUMO1) linkage. Chenodeoxycholate contacts are provided by R345, Y375, and Y383. The residue at position 456 (T456) is a Phosphothreonine; by PKC/PRKCZ. A chenodeoxycholate-binding site is contributed by H461.

The protein belongs to the nuclear hormone receptor family. NR1 subfamily. As to quaternary structure, heterodimer (via C-terminus) with RXRA (via DBD); the heterodimerization enhances the binding affinity for LXXLL motifs from coactivators. Binds DNA predominantly as a heterodimer with RXRA. After activation by agonist binding interacts with coactivators. Interacts with NCOA1, NCOA2, PPARGC1A, CARM1, SETD7, PRMT1, GPS2, SMARCA4 and MED1. Interacts with EP300 and SMARCD1. Interacts with XRCC5 and XRCC6; decreasing NR1H4/FXR transactivation activity towards ABCB11/BSEP. Interacts with PAGR1 and NCOA6; indicative for an association with an MLL2/MLL3 complex (ASCOM). In terms of processing, acetylated by EP300. Lys-227 as is the major acetylation site for EP300; the dynamicly regulated acetylation inhibits heterodimerization with RXRA and transactivation activity. Deacetylated by SIRT1. Methylation may increase transactivation of target genes. Post-translationally, phosphorylation by PKC/PRKCA increases transactivation activity by promoting association with PPARGC1A. In terms of processing, sumoylated upon ligand binding. As to expression, liver and hepatocyte-related cells express mainly FXRalpha1-type isoforms with isoform 3 and isoform 4 in approximately equal proportions. In intestine and kidney mainly FXRalpha2-type isoforms are expressed with isoform 1 and isoform 2 in approximately equal proportions. Expressed in pancreatic beta cells and macrophages.

The protein localises to the nucleus. Its function is as follows. Ligand-activated transcription factor. Receptor for bile acids (BAs) such as chenodeoxycholic acid (CDCA), lithocholic acid, deoxycholic acid (DCA) and allocholic acid (ACA). Plays a essential role in BA homeostasis through the regulation of genes involved in BA synthesis, conjugation and enterohepatic circulation. Also regulates lipid and glucose homeostasis and is involved innate immune response. The FXR-RXR heterodimer binds predominantly to farnesoid X receptor response elements (FXREs) containing two inverted repeats of the consensus sequence 5'-AGGTCA-3' in which the monomers are spaced by 1 nucleotide (IR-1) but also to tandem repeat DR1 sites with lower affinity, and can be activated by either FXR or RXR-specific ligands. It is proposed that monomeric nuclear receptors such as NR5A2/LRH-1 bound to coregulatory nuclear responsive element (NRE) halfsites located in close proximity to FXREs modulate transcriptional activity. In the liver activates transcription of the corepressor NR0B2 thereby indirectly inhibiting CYP7A1 and CYP8B1 (involved in BA synthesis) implicating at least in part histone demethylase KDM1A resulting in epigenomic repression, and SLC10A1/NTCP (involved in hepatic uptake of conjugated BAs). Activates transcription of the repressor MAFG (involved in regulation of BA synthesis). Activates transcription of SLC27A5/BACS and BAAT (involved in BA conjugation), ABCB11/BSEP (involved in bile salt export) by directly recruiting histone methyltransferase CARM1, and ABCC2/MRP2 (involved in secretion of conjugated BAs) and ABCB4 (involved in secretion of phosphatidylcholine in the small intestine). Activates transcription of SLC27A5/BACS and BAAT (involved in BA conjugation), ABCB11/BSEP (involved in bile salt export) by directly recruiting histone methyltransferase CARM1, and ABCC2/MRP2 (involved in secretion of conjugated BAs) and ABCB4 (involved in secretion of phosphatidylcholine in the small intestine). In the intestine activates FGF19 expression and secretion leading to hepatic CYP7A1 repression. The function also involves the coordinated induction of hepatic KLB/beta-klotho expression. Regulates transcription of liver UGT2B4 and SULT2A1 involved in BA detoxification; binding to the UGT2B4 promoter seems to imply a monomeric transactivation independent of RXRA. Modulates lipid homeostasis by activating liver NR0B2/SHP-mediated repression of SREBF1 (involved in de novo lipogenesis), expression of PLTP (involved in HDL formation), SCARB1 (involved in HDL hepatic uptake), APOE, APOC1, APOC4, PPARA (involved in beta-oxidation of fatty acids), VLDLR and SDC1 (involved in the hepatic uptake of LDL and IDL remnants), and inhibiting expression of MTTP (involved in VLDL assembly. Increases expression of APOC2 (promoting lipoprotein lipase activity implicated in triglyceride clearance). Transrepresses APOA1 involving a monomeric competition with NR2A1 for binding to a DR1 element. Also reduces triglyceride clearance by inhibiting expression of ANGPTL3 and APOC3 (both involved in inhibition of lipoprotein lipase). Involved in glucose homeostasis by modulating hepatic gluconeogenesis through activation of NR0B2/SHP-mediated repression of respective genes. Modulates glycogen synthesis (inducing phosphorylation of glycogen synthase kinase-3). Modulates glucose-stimulated insulin secretion and is involved in insulin resistance. Involved in intestinal innate immunity. Plays a role in protecting the distal small intestine against bacterial overgrowth and preservation of the epithelial barrier. Down-regulates inflammatory cytokine expression in several types of immune cells including macrophages and mononuclear cells. Mediates trans-repression of TLR4-induced cytokine expression; the function seems to require its sumoylation and prevents N-CoR nuclear receptor corepressor clearance from target genes such as IL1B and NOS2. Involved in the TLR9-mediated protective mechanism in intestinal inflammation. Plays an anti-inflammatory role in liver inflammation; proposed to inhibit pro-inflammatory (but not antiapoptotic) NF-kappa-B signaling). Functionally, promotes transcriptional activation of target genes NR0B2/SHP (inducible by unconjugated CDCA), SLC51B/OSTB (inducible by unconjugated CDCA and DCA) and FABP6/IBAP; low activity for ABCB11/BSEP (inducible by unconjugated CDCA, DCA and ACA); not inducible by taurine- and glycine-amidated CDCA. In terms of biological role, promotes transcriptional activation of target genes ABCB11/BSEP (inducible by unconjugated CDCA, DCA and ACA), NR0B2/SHP (inducible by unconjugated CDCA DCA and ACA), SLC51B/OSTB (inducible by unconjugated CDCA and DCA) and FABP6/IBAP; not inducible by taurine- and glycine-amidated CDCA. Promotes transcriptional activation of target genes NR0B2/SHP (inducible by unconjugated CDCA), SLC51B/OSTB (inducible by unconjugated CDCA and DCA) and IBAP; low activity for ABCB11/BSEP (inducible by unconjugated CDCA, DCA and ACA); not inducible by taurine- and glycine-amidated CDCA. Its function is as follows. Promotes transcriptional activation of target genes ABCB11/BSEP (inducible by unconjugated CDCA, ACA and DCA), NR0B2/SHP (inducible by unconjugated CDCA, ACA and DCA), SLC51B/OSTB (inducible by unconjugated CDCA and DCA) and FABP6/IBAP; most efficient isoform compared to isoforms 1 to 3; not inducible by taurine- and glycine-amidated CDCA. The protein is Bile acid receptor (NR1H4) of Homo sapiens (Human).